The sequence spans 27 residues: Delta-conotoxin TxVIB (27 aa).

Intrachain disulfides connect cysteine 2-cysteine 17, cysteine 9-cysteine 21, and cysteine 16-cysteine 26.

It belongs to the conotoxin O1 superfamily. As to expression, expressed by the venom duct.

The protein localises to the secreted. Delta-conotoxins bind to site 6 of voltage-gated sodium channels (Nav) and inhibit the inactivation process. Induces membrane depolarization and spontaneous repetitive firing of neurons. In Conus textile (Cloth-of-gold cone), this protein is Delta-conotoxin TxVIB.